Reading from the N-terminus, the 372-residue chain is Glutamate 5-kinase (372 aa).

Residue K14 coordinates ATP. Substrate is bound by residues S54, D141, and N153. Residue 173 to 174 (TD) coordinates ATP. The PUA domain maps to 280–358 (RGHVVIDDGA…GEIESVLGYM (79 aa)).

Belongs to the glutamate 5-kinase family.

The protein localises to the cytoplasm. It catalyses the reaction L-glutamate + ATP = L-glutamyl 5-phosphate + ADP. Its pathway is amino-acid biosynthesis; L-proline biosynthesis; L-glutamate 5-semialdehyde from L-glutamate: step 1/2. Its function is as follows. Catalyzes the transfer of a phosphate group to glutamate to form L-glutamate 5-phosphate. In Paraburkholderia phymatum (strain DSM 17167 / CIP 108236 / LMG 21445 / STM815) (Burkholderia phymatum), this protein is Glutamate 5-kinase.